Reading from the N-terminus, the 482-residue chain is MVTTAEKTNIGYITQIIGPVVDVKFPNGKLPQIYNALTIKGTNEAGQQLNLTVEVQQLLGDNQIRAVAMSSTDGLVRGLEVVDTGAPISVPVGKATLGRIFNVLGEPVDNRGPVNNQETLPIHRPAPKLTELETKPSVFETGIKVVDLLTPYRRGGKIGLFGGAGVGKTVIMMELINNIATQHGGVSVFAGVGERTREGNDLYNEMIESGVINNENLNESKIALVYGQMNEPPGARMRVGLSGLTMAEYFRDVNKQDVLLFIDNIFRFVQAGSEVSALLGRMPSAVGYQPTLGTDVGQLQERITSTTEGSITSIQAVYVPADDLTDPAPATTFAHLDGTTVLSRGLASKGIYPAVDPLGSTSTMLQPNIVGDEHYNTARAVQSTLQRYKELQDIIAILGLDELSEEDRLIVARARKVERFLSQPFFVAEVFTGSPGKYVKLEDTIKGFQKILSGELDDLPEQAFYLVGDINEAIAKAEKIKG.

Residue 162-169 (GGAGVGKT) coordinates ATP.

The protein belongs to the ATPase alpha/beta chains family. F-type ATPases have 2 components, CF(1) - the catalytic core - and CF(0) - the membrane proton channel. CF(1) has five subunits: alpha(3), beta(3), gamma(1), delta(1), epsilon(1). CF(0) has four main subunits: a(1), b(1), b'(1) and c(9-12).

It localises to the cellular thylakoid membrane. It catalyses the reaction ATP + H2O + 4 H(+)(in) = ADP + phosphate + 5 H(+)(out). Functionally, produces ATP from ADP in the presence of a proton gradient across the membrane. The catalytic sites are hosted primarily by the beta subunits. This chain is ATP synthase subunit beta, found in Nostoc sp. (strain PCC 7120 / SAG 25.82 / UTEX 2576).